Here is a 264-residue protein sequence, read N- to C-terminus: MTSLPIILASSPLRNLTKPCSTSQIPKPIQNSTKQPPIHLLTKTNLSVTISQLIITSPVLASESFDSISSDPSSGKIDLESILVTIDNFFNKYPFFVAGCTFTYLVVYPAVMFYLRKYKPISAMNAFRKLKNESDSQLLDIRDVKTLALLASPNLKFLGKSSVQVPFSENDEEGFLTKVKGSFSDAENTVVCVLDNFDGNSSKVAELLIKNGFKEAYYIRGGARGKNGWLAIQEELLPPPVHMYTAKNVKSSNNNEASVVGTEN.

The N-terminal 60 residues, 1–60 (MTSLPIILASSPLRNLTKPCSTSQIPKPIQNSTKQPPIHLLTKTNLSVTISQLIITSPVL), are a transit peptide targeting the chloroplast. Residues 95–115 (FFVAGCTFTYLVVYPAVMFYL) form a helical membrane-spanning segment. The 101-residue stretch at 132–232 (NESDSQLLDI…ARGKNGWLAI (101 aa)) folds into the Rhodanese domain.

Its subcellular location is the plastid. The protein resides in the chloroplast. It is found in the membrane. This is Rhodanese-like domain-containing protein 4A, chloroplastic (STR4A) from Arabidopsis thaliana (Mouse-ear cress).